Consider the following 183-residue polypeptide: Ribosome-recycling factor (183 aa).

It belongs to the RRF family.

The protein localises to the cytoplasm. Its function is as follows. Responsible for the release of ribosomes from messenger RNA at the termination of protein biosynthesis. May increase the efficiency of translation by recycling ribosomes from one round of translation to another. The chain is Ribosome-recycling factor from Mycoplasmoides gallisepticum (strain R(low / passage 15 / clone 2)) (Mycoplasma gallisepticum).